The primary structure comprises 284 residues: Mevalonate kinase (284 aa).

86–96 (PIGSGLGSSAA) lines the ATP pocket. D137 serves as the catalytic Proton acceptor.

Belongs to the GHMP kinase family. Mevalonate kinase subfamily. In terms of assembly, homodimer. Mg(2+) serves as cofactor.

It is found in the cytoplasm. It carries out the reaction (R)-mevalonate + ATP = (R)-5-phosphomevalonate + ADP + H(+). Its pathway is isoprenoid biosynthesis; isopentenyl diphosphate biosynthesis via mevalonate pathway; isopentenyl diphosphate from (R)-mevalonate: step 1/3. Functionally, catalyzes the phosphorylation of (R)-mevalonate (MVA) to (R)-mevalonate 5-phosphate (MVAP). Functions in the mevalonate (MVA) pathway leading to isopentenyl diphosphate (IPP), a key precursor for the biosynthesis of isoprenoid compounds such as archaeal membrane lipids. The chain is Mevalonate kinase from Archaeoglobus fulgidus (strain ATCC 49558 / DSM 4304 / JCM 9628 / NBRC 100126 / VC-16).